The following is an 818-amino-acid chain: Exchange factor for Arf-6 (818 aa).

Disordered regions lie at residues 92–123 (AQKL…ESSP), 137–168 (MEST…ENDD), 208–291 (NHHH…GVSN), and 326–383 (RTTP…VGGE). A compositionally biased stretch (basic and acidic residues) spans 107-119 (IERRGSLARKTSE). The segment covering 140–149 (TDVEESEEET) has biased composition (acidic residues). Basic and acidic residues predominate over residues 154-165 (TDEKENQKKPNE). 2 stretches are compositionally biased toward polar residues: residues 213–223 (YNSSPQISTLS) and 255–269 (MSNN…SPEN). Over residues 326–347 (RTTPNTAASNSSASASPSLHAT) the composition is skewed to low complexity. The region spanning 356 to 532 (GVSLRSAESS…KTLFQSIKDN (177 aa)) is the SEC7 domain. The segment covering 361 to 380 (SAESSNLNQTAVPSTSTNSV) has biased composition (polar residues). A PH domain is found at 569–681 (VEYYSGFLMR…WCEKINFVAA (113 aa)). Over residues 782–799 (TMNIMMTPTRRQQQNQKP) the composition is skewed to polar residues. Positions 782 to 818 (TMNIMMTPTRRQQQNQKPVVSEDRLSYTDAVNGAAAH) are disordered.

Interacts (via short N-terminal region) with microtubule-associated proteins tac-1 and zyg-8.

It is found in the cytoplasm. It localises to the cell cortex. Its subcellular location is the cell membrane. In terms of biological role, guanine nucleotide exchange factor for arf-6. Involved in response to injury in mechanosensory neurons. Inhibits axon regrowth via microtubule dynamics, possibly by inducing axonal microtubule catastrophes. Limits microtubule growth near the cellular cortex of early embryonic cells. In Caenorhabditis elegans, this protein is Exchange factor for Arf-6.